Consider the following 275-residue polypeptide: Large ribosomal subunit protein uL2 (275 aa).

Disordered regions lie at residues 28-59 (KPYA…GGHK) and 224-275 (AMNP…RHKR). A compositionally biased stretch (polar residues) spans 35–46 (DTQSSTAGRNNN). Basic residues predominate over residues 50–59 (TTRHKGGGHK).

Belongs to the universal ribosomal protein uL2 family. In terms of assembly, part of the 50S ribosomal subunit. Forms a bridge to the 30S subunit in the 70S ribosome.

In terms of biological role, one of the primary rRNA binding proteins. Required for association of the 30S and 50S subunits to form the 70S ribosome, for tRNA binding and peptide bond formation. It has been suggested to have peptidyltransferase activity; this is somewhat controversial. Makes several contacts with the 16S rRNA in the 70S ribosome. This chain is Large ribosomal subunit protein uL2, found in Paraburkholderia phymatum (strain DSM 17167 / CIP 108236 / LMG 21445 / STM815) (Burkholderia phymatum).